The following is a 146-amino-acid chain: Snaclec coagulation factor IX/factor X-binding protein subunit B (146 aa).

Positions 1–23 (MGRFIFMSFGFLVVFLSLSGTAA) are cleaved as a signal peptide. One can recognise a C-type lectin domain in the interval 24–146 (DCPSDWSSYE…MAQFVCEFQA (123 aa)). Intrachain disulfides connect cysteine 25–cysteine 36, cysteine 53–cysteine 142, and cysteine 119–cysteine 134. Residues serine 64, glutamine 66, and glutamate 70 each contribute to the Ca(2+) site. Glutamate 143 lines the Ca(2+) pocket.

The protein belongs to the snaclec family. As to quaternary structure, heterodimer with subunit A of IX/X-bp or IX-bp; disulfide-linked. Expressed by the venom gland.

Its subcellular location is the secreted. When linked to subunit A of IX/X-bp, anticoagulant protein which binds to the gamma-carboxyglutamic acid-domain regions of factors IX (F9) and factor X (10) in the presence of calcium with a 1 to 1 stoichiometry. Its function is as follows. When linked to subunit A of IX-bp, anticoagulant protein which binds to the gamma-carboxyglutamic acid-domain regions of factor IX (but not to factor X) in the presence of calcium with a 1 to 1 stoichiometry. In Protobothrops flavoviridis (Habu), this protein is Snaclec coagulation factor IX/factor X-binding protein subunit B.